We begin with the raw amino-acid sequence, 156 residues long: Small ribosomal subunit protein uS7 (156 aa).

This sequence belongs to the universal ribosomal protein uS7 family. In terms of assembly, part of the 30S ribosomal subunit. Contacts proteins S9 and S11.

In terms of biological role, one of the primary rRNA binding proteins, it binds directly to 16S rRNA where it nucleates assembly of the head domain of the 30S subunit. Is located at the subunit interface close to the decoding center, probably blocks exit of the E-site tRNA. This is Small ribosomal subunit protein uS7 from Chlorobaculum tepidum (strain ATCC 49652 / DSM 12025 / NBRC 103806 / TLS) (Chlorobium tepidum).